The primary structure comprises 248 residues: ATP synthase subunit a, chloroplastic (248 aa).

Transmembrane regions (helical) follow at residues Gly-35 to Gly-55, Val-94 to Ile-114, Ile-133 to Ser-153, Val-202 to Ala-222, and Ser-224 to Gly-244.

This sequence belongs to the ATPase A chain family. In terms of assembly, F-type ATPases have 2 components, CF(1) - the catalytic core - and CF(0) - the membrane proton channel. CF(1) has five subunits: alpha(3), beta(3), gamma(1), delta(1), epsilon(1). CF(0) has four main subunits: a, b, b' and c.

It is found in the plastid. Its subcellular location is the chloroplast thylakoid membrane. In terms of biological role, key component of the proton channel; it plays a direct role in the translocation of protons across the membrane. This Porphyra purpurea (Red seaweed) protein is ATP synthase subunit a, chloroplastic.